The primary structure comprises 292 residues: Pantothenate synthetase (292 aa).

30–37 (MGFLHIGH) contributes to the ATP binding site. H37 functions as the Proton donor in the catalytic mechanism. Q61 contributes to the (R)-pantoate binding site. Q61 serves as a coordination point for beta-alanine. 147–150 (GEKD) contributes to the ATP binding site. Q153 lines the (R)-pantoate pocket. Residues V176 and 184–187 (CSSR) contribute to the ATP site.

This sequence belongs to the pantothenate synthetase family. Homodimer.

Its subcellular location is the cytoplasm. It catalyses the reaction (R)-pantoate + beta-alanine + ATP = (R)-pantothenate + AMP + diphosphate + H(+). It participates in cofactor biosynthesis; (R)-pantothenate biosynthesis; (R)-pantothenate from (R)-pantoate and beta-alanine: step 1/1. Catalyzes the condensation of pantoate with beta-alanine in an ATP-dependent reaction via a pantoyl-adenylate intermediate. This is Pantothenate synthetase from Agrobacterium fabrum (strain C58 / ATCC 33970) (Agrobacterium tumefaciens (strain C58)).